Reading from the N-terminus, the 444-residue chain is Exodeoxyribonuclease 7 large subunit (444 aa).

Belongs to the XseA family. Heterooligomer composed of large and small subunits.

Its subcellular location is the cytoplasm. The catalysed reaction is Exonucleolytic cleavage in either 5'- to 3'- or 3'- to 5'-direction to yield nucleoside 5'-phosphates.. Its function is as follows. Bidirectionally degrades single-stranded DNA into large acid-insoluble oligonucleotides, which are then degraded further into small acid-soluble oligonucleotides. The sequence is that of Exodeoxyribonuclease 7 large subunit from Pseudoalteromonas translucida (strain TAC 125).